A 467-amino-acid chain; its full sequence is 2-succinylbenzoate--CoA ligase (467 aa).

Belongs to the ATP-dependent AMP-binding enzyme family. MenE subfamily.

The catalysed reaction is 2-succinylbenzoate + ATP + CoA = 2-succinylbenzoyl-CoA + AMP + diphosphate. It functions in the pathway quinol/quinone metabolism; 1,4-dihydroxy-2-naphthoate biosynthesis; 1,4-dihydroxy-2-naphthoate from chorismate: step 5/7. Its pathway is quinol/quinone metabolism; menaquinone biosynthesis. Functionally, converts 2-succinylbenzoate (OSB) to 2-succinylbenzoyl-CoA (OSB-CoA). This chain is 2-succinylbenzoate--CoA ligase, found in Listeria monocytogenes serotype 4b (strain F2365).